The sequence spans 203 residues: Proteasome subunit beta 2 (203 aa).

Positions 1–10 (MNLQNKILKG) are cleaved as a propeptide — removed in mature form; by autocatalysis. Thr11 serves as the catalytic Nucleophile.

It belongs to the peptidase T1B family. In terms of assembly, the 20S proteasome core is composed of 14 alpha and 14 beta subunits that assemble into four stacked heptameric rings, resulting in a barrel-shaped structure. The two inner rings, each composed of seven catalytic beta subunits, are sandwiched by two outer rings, each composed of seven alpha subunits. The catalytic chamber with the active sites is on the inside of the barrel. Has a gated structure, the ends of the cylinder being occluded by the N-termini of the alpha-subunits. Is capped at one or both ends by the proteasome regulatory ATPase, PAN.

The protein resides in the cytoplasm. It carries out the reaction Cleavage of peptide bonds with very broad specificity.. The formation of the proteasomal ATPase PAN-20S proteasome complex, via the docking of the C-termini of PAN into the intersubunit pockets in the alpha-rings, triggers opening of the gate for substrate entry. Interconversion between the open-gate and close-gate conformations leads to a dynamic regulation of the 20S proteasome proteolysis activity. Its function is as follows. Component of the proteasome core, a large protease complex with broad specificity involved in protein degradation. This is Proteasome subunit beta 2 from Sulfolobus acidocaldarius (strain ATCC 33909 / DSM 639 / JCM 8929 / NBRC 15157 / NCIMB 11770).